The chain runs to 517 residues: MLSSRAEAAMTAADRAIQRFLRTGAAVRYKVMKNWGVIGGIAAALAAGIYVIWGPITERKKRRKGLVPGLVNLGNTCFMNSLLQGLSACPAFIRWLEEFTSQYSRDQKEPPSHQYLSLTLLHLLKALSCQEVTDDEVLDASCLLDVLRMYRWQISSFEEQDAHELFHVITSSLEDERDRQPRVTHLFDVHSLEQQSEITPKQITCRTRGSPHPTSNHWKSQHPFHGRLTSNMVCKHCEHQSPVRFDTFDSLSLSIPAATWGHPLTLDHCLHHFISSESVRDVVCDNCTKIEAKGTLNGEKVEHQRTTFVKQLKLGKLPQCLCIHLQRLSWSSHGTPLKRHEHVQFNEFLMMDIYKYHLLGHKPSQHNPKLNKNPGPTLELQDGPGAPTPVLNQPGAPKTQIFMNGACSPSLLPTLSAPMPFPLPVVPDYSSSTYLFRLMAVVVHHGDMHSGHFVTYRRSPPSARNPLSTSNQWLWVSDDTVRKASLQEVLSSSAYLLFYERVLSRMQHQSQECKSEE.

Topologically, residues M1–W35 are mitochondrial intermembrane. The chain crosses the membrane as a helical span at residues G36–I56. At T57–E517 the chain is on the cytoplasmic side. The USP domain occupies P68–V502. The active-site Nucleophile is the C77. Glycyl lysine isopeptide (Lys-Gly) (interchain with G-Cter in ubiquitin) cross-links involve residues K235 and K289. The disordered stretch occupies residues S364 to G395. H452 serves as the catalytic Proton acceptor.

Belongs to the peptidase C19 family. Ubiquitinated by parkin (PRKN) at Lys-235 and Lys-289, leading to its degradation. In terms of tissue distribution, expressed in skeletal muscle, pancreas, liver and kidney.

The protein resides in the mitochondrion outer membrane. The enzyme catalyses Thiol-dependent hydrolysis of ester, thioester, amide, peptide and isopeptide bonds formed by the C-terminal Gly of ubiquitin (a 76-residue protein attached to proteins as an intracellular targeting signal).. With respect to regulation, inhibited by the diterpenoid derivative 15-oxospiramilactone (S3). Its function is as follows. Deubiquitinating enzyme tethered to the mitochondrial outer membrane that acts as a key inhibitor of mitophagy by counteracting the action of parkin (PRKN): hydrolyzes ubiquitin attached by parkin on target proteins, such as RHOT1/MIRO1 and TOMM20, thereby blocking parkin's ability to drive mitophagy. Preferentially cleaves 'Lys-6'- and 'Lys-11'-linked polyubiquitin chains, 2 types of linkage that participate in mitophagic signaling. Does not cleave efficiently polyubiquitin phosphorylated at 'Ser-65'. Acts as a negative regulator of mitochondrial fusion by mediating deubiquitination of MFN1 and MFN2. The chain is Ubiquitin carboxyl-terminal hydrolase 30 from Homo sapiens (Human).